Reading from the N-terminus, the 272-residue chain is uncharacterized protein (272 aa).

This is an uncharacterized protein from Bacillus subtilis (strain 168).